Consider the following 349-residue polypeptide: Isopentenyl-diphosphate delta-isomerase (349 aa).

9–10 (RK) is a binding site for substrate. FMN-binding positions include 65-67 (AMT), serine 95, and asparagine 124. 95–97 (STH) is a substrate binding site. Residue glutamine 154 coordinates substrate. Position 155 (glutamate 155) interacts with Mg(2+). Residues lysine 186, serine 211, threonine 216, 262–264 (GVR), and 283–284 (SR) each bind FMN.

The protein belongs to the IPP isomerase type 2 family. As to quaternary structure, homooctamer. Dimer of tetramers. FMN serves as cofactor. The cofactor is NADPH. Requires Mg(2+) as cofactor.

It localises to the cytoplasm. The catalysed reaction is isopentenyl diphosphate = dimethylallyl diphosphate. In terms of biological role, involved in the biosynthesis of isoprenoids. Catalyzes the 1,3-allylic rearrangement of the homoallylic substrate isopentenyl (IPP) to its allylic isomer, dimethylallyl diphosphate (DMAPP). In Staphylococcus haemolyticus (strain JCSC1435), this protein is Isopentenyl-diphosphate delta-isomerase.